The primary structure comprises 607 residues: Guanine nucleotide-binding protein-like 1 (607 aa).

Over residues 1–14 (MPRKKPFSVKQKKK) the composition is skewed to basic residues. A disordered region spans residues 1–81 (MPRKKPFSVK…GPRGYDPNRY (81 aa)). A compositionally biased stretch (basic and acidic residues) spans 15-26 (QLQDKRERKRGL). A phosphoserine mark is found at serine 32, serine 33, and serine 34. A phosphothreonine mark is found at threonine 48 and threonine 50. Phosphoserine occurs at positions 51 and 68. The CP-type G domain maps to 178 to 418 (WRQLWRVLEM…LCDCPGLIFP (241 aa)). 225–228 (NKVD) contacts GTP. Serine 324 bears the Phosphoserine mark. Residues 367 to 374 (GFPNVGKS) and 411 to 415 (DCPGL) each bind GTP. The segment at 547–607 (GPAGDEEEEE…PYALLGEDEC (61 aa)) is disordered. Residues 550 to 584 (GDEEEEEEEELSSSCEEEGEEDRDADEEGEGDEET) are compositionally biased toward acidic residues. Phosphoserine occurs at positions 561, 562, and 563.

The protein belongs to the TRAFAC class YlqF/YawG GTPase family.

Possible regulatory or functional link with the histocompatibility cluster. The sequence is that of Guanine nucleotide-binding protein-like 1 (GNL1) from Pan troglodytes (Chimpanzee).